A 104-amino-acid chain; its full sequence is Large ribosomal subunit protein uL24 (104 aa).

The protein belongs to the universal ribosomal protein uL24 family. Part of the 50S ribosomal subunit.

One of two assembly initiator proteins, it binds directly to the 5'-end of the 23S rRNA, where it nucleates assembly of the 50S subunit. In terms of biological role, one of the proteins that surrounds the polypeptide exit tunnel on the outside of the subunit. The sequence is that of Large ribosomal subunit protein uL24 from Corynebacterium aurimucosum (strain ATCC 700975 / DSM 44827 / CIP 107346 / CN-1) (Corynebacterium nigricans).